We begin with the raw amino-acid sequence, 649 residues long: 1,4-alpha-glucan branching enzyme GlgB (649 aa).

Asp315 (nucleophile) is an active-site residue. The active-site Proton donor is Glu366.

Belongs to the glycosyl hydrolase 13 family. GlgB subfamily. Monomer.

It carries out the reaction Transfers a segment of a (1-&gt;4)-alpha-D-glucan chain to a primary hydroxy group in a similar glucan chain.. The protein operates within glycan biosynthesis; glycogen biosynthesis. Catalyzes the formation of the alpha-1,6-glucosidic linkages in glycogen by scission of a 1,4-alpha-linked oligosaccharide from growing alpha-1,4-glucan chains and the subsequent attachment of the oligosaccharide to the alpha-1,6 position. This chain is 1,4-alpha-glucan branching enzyme GlgB, found in Ligilactobacillus salivarius (strain UCC118) (Lactobacillus salivarius).